Reading from the N-terminus, the 206-residue chain is Undecaprenyl-diphosphatase (206 aa).

5 consecutive transmembrane segments (helical) span residues 5–25 (YYWI…LIGG), 53–73 (FLSK…LLIF), 79–99 (IGIT…VSKY), 138–158 (VTLL…EAVL), and 164–184 (VYVG…GSWI).

The protein localises to the cell membrane. The enzyme catalyses di-trans,octa-cis-undecaprenyl diphosphate + H2O = di-trans,octa-cis-undecaprenyl phosphate + phosphate + H(+). This is Undecaprenyl-diphosphatase (sepP) from Sulfolobus acidocaldarius (strain ATCC 33909 / DSM 639 / JCM 8929 / NBRC 15157 / NCIMB 11770).